The primary structure comprises 284 residues: tRNA (guanine-N(7)-)-methyltransferase (284 aa).

S-adenosyl-L-methionine contacts are provided by residues glycine 102, 125-126 (EI), 160-161 (NT), and cysteine 180. Residue aspartate 183 is part of the active site. 258–260 (TEE) serves as a coordination point for S-adenosyl-L-methionine.

This sequence belongs to the class I-like SAM-binding methyltransferase superfamily. TrmB family. Forms a complex with TRM82.

The protein localises to the nucleus. It catalyses the reaction guanosine(46) in tRNA + S-adenosyl-L-methionine = N(7)-methylguanosine(46) in tRNA + S-adenosyl-L-homocysteine. The protein operates within tRNA modification; N(7)-methylguanine-tRNA biosynthesis. Catalyzes the formation of N(7)-methylguanine at position 46 (m7G46) in tRNA. The polypeptide is tRNA (guanine-N(7)-)-methyltransferase (Podospora anserina (strain S / ATCC MYA-4624 / DSM 980 / FGSC 10383) (Pleurage anserina)).